We begin with the raw amino-acid sequence, 134 residues long: uncharacterized protein (134 aa).

A helical membrane pass occupies residues 4 to 24; the sequence is NLLILLSLLLVVVAIMWWLYE.

The protein resides in the membrane. This is an uncharacterized protein from Invertebrate iridescent virus 6 (IIV-6).